The primary structure comprises 415 residues: MKGSYKSRWVIVIVVVIAAIAAFWFWQGRNDSRSAAPGATKQAQQSPAGGRRGMRAGPLAPVQAATAVEQAVPRYLTGLGTITAANTVTVRSRVDGQLMALHFQEGQQVKAGDLLAEIDPSQFKVALAQAQGQLAKDKATLANARRDLARYQQLVKTNLVSRQELDAQQALVSETEGTIKADEASVASAQLQLDWSRITAPVDGRVGLKQVDVGNQISSGDTTGIVVITQTHPIDLLFTLPESDIATVVQAQKAGKPLVVEAWDRTNSKKLSEGTLLSLDNQIDATTGTIKVKARFNNQDDALFPNQFVNARMLVDTEQNAVVIPTAALQMGNEGHFVWVLNSENKVSKHLVTPGIQDSQKVVIRAGISAGDRVVTDGIDRLTEGAKVEVVEAQSATTSEEKATSREYAKKGARS.

A signal peptide spans 1–21 (MKGSYKSRWVIVIVVVIAAIA). Disordered regions lie at residues 32–56 (SRSA…GMRA) and 392–415 (EAQS…GARS). The segment covering 399 to 415 (SEEKATSREYAKKGARS) has biased composition (basic and acidic residues).

The protein belongs to the membrane fusion protein (MFP) (TC 8.A.1) family. Part of a tripartite efflux system composed of MdtA, MdtB and MdtC.

Its subcellular location is the cell inner membrane. The MdtABC tripartite complex confers resistance against novobiocin and deoxycholate. In Escherichia coli O7:K1 (strain IAI39 / ExPEC), this protein is Multidrug resistance protein MdtA.